A 147-amino-acid chain; its full sequence is UPF0735 ACT domain-containing protein ABC1543 (147 aa).

In terms of domain architecture, ACT spans 70–145; it reads TFSINLADRS…SVERVELVGS (76 aa).

The protein belongs to the UPF0735 family.

The sequence is that of UPF0735 ACT domain-containing protein ABC1543 from Shouchella clausii (strain KSM-K16) (Alkalihalobacillus clausii).